The chain runs to 185 residues: MRCPFCGGPDTQVKDSRPSEDSSAIRRRRVCPDCGGRFTTFERVQLRELVVLKRSGKRVPFDRDKLQRSIDVALRKRTVDPERVERLVSGITRRLESGGEGEVTSEAIGEAVMEGLKGLDDVAYVRFASVYKNFREAQDFQDLLGTLGERLEGEGDLPEDGEAAPAPPDEVVAAPRRGRPARKRA.

A disordered region spans residues 1–24 (MRCPFCGGPDTQVKDSRPSEDSSA). The segment at 3-34 (CPFCGGPDTQVKDSRPSEDSSAIRRRRVCPDC) is a zinc-finger region. Positions 12 to 24 (QVKDSRPSEDSSA) are enriched in basic and acidic residues. In terms of domain architecture, ATP-cone spans 49–139 (LVVLKRSGKR…VYKNFREAQD (91 aa)). The tract at residues 149-185 (ERLEGEGDLPEDGEAAPAPPDEVVAAPRRGRPARKRA) is disordered. Residues 176–185 (RRGRPARKRA) show a composition bias toward basic residues.

The protein belongs to the NrdR family. Zn(2+) serves as cofactor.

Functionally, negatively regulates transcription of bacterial ribonucleotide reductase nrd genes and operons by binding to NrdR-boxes. The polypeptide is Transcriptional repressor NrdR (Methylorubrum extorquens (strain PA1) (Methylobacterium extorquens)).